The chain runs to 305 residues: tRNA dimethylallyltransferase (305 aa).

Gly-9–Thr-16 provides a ligand contact to ATP. Substrate is bound at residue Thr-11–Thr-16. The tract at residues Asp-34 to Gln-37 is interaction with substrate tRNA.

It belongs to the IPP transferase family. In terms of assembly, monomer. The cofactor is Mg(2+).

The catalysed reaction is adenosine(37) in tRNA + dimethylallyl diphosphate = N(6)-dimethylallyladenosine(37) in tRNA + diphosphate. Its function is as follows. Catalyzes the transfer of a dimethylallyl group onto the adenine at position 37 in tRNAs that read codons beginning with uridine, leading to the formation of N6-(dimethylallyl)adenosine (i(6)A). This chain is tRNA dimethylallyltransferase, found in Roseiflexus sp. (strain RS-1).